The following is a 100-amino-acid chain: Apolipoprotein C-II (100 aa).

Positions Met-1–Ala-22 are cleaved as a signal peptide. Positions Ser-66 to Met-74 are lipid binding. A lipoprotein lipase cofactor region spans residues Ser-78–Glu-100.

Belongs to the apolipoprotein C2 family. Proapolipoprotein C-II is synthesized as a sialic acid containing glycoprotein which is subsequently desialylated prior to its proteolytic processing. Post-translationally, proapolipoprotein C-II, the major form found in plasma undergoes proteolytic cleavage of its N-terminal hexapeptide to generate the mature form apolipoprotein C-II, which occurs as the minor form in plasma.

It localises to the secreted. In terms of biological role, component of chylomicrons, very low-density lipoproteins (VLDL), low-density lipoproteins (LDL), and high-density lipoproteins (HDL) in plasma. Plays an important role in lipoprotein metabolism as an activator of lipoprotein lipase. The sequence is that of Apolipoprotein C-II (APOC2) from Myodes glareolus (Bank vole).